The primary structure comprises 349 residues: Protein RecA (349 aa).

Residue 65 to 72 (GPESSGKT) coordinates ATP.

It belongs to the RecA family.

It is found in the cytoplasm. Functionally, can catalyze the hydrolysis of ATP in the presence of single-stranded DNA, the ATP-dependent uptake of single-stranded DNA by duplex DNA, and the ATP-dependent hybridization of homologous single-stranded DNAs. It interacts with LexA causing its activation and leading to its autocatalytic cleavage. This chain is Protein RecA, found in Vibrio vulnificus (strain CMCP6).